Reading from the N-terminus, the 31-residue chain is Cytochrome b6-f complex subunit 6 (31 aa).

Residues 3 to 23 traverse the membrane as a helical segment; that stretch reads ILIGYIILLACAFGLAAGLFF.

This sequence belongs to the PetL family. The 4 large subunits of the cytochrome b6-f complex are cytochrome b6, subunit IV (17 kDa polypeptide, PetD), cytochrome f and the Rieske protein, while the 4 small subunits are PetG, PetL, PetM and PetN. The complex functions as a dimer.

It is found in the plastid. The protein localises to the chloroplast thylakoid membrane. In terms of biological role, component of the cytochrome b6-f complex, which mediates electron transfer between photosystem II (PSII) and photosystem I (PSI), cyclic electron flow around PSI, and state transitions. PetL is important for photoautotrophic growth as well as for electron transfer efficiency and stability of the cytochrome b6-f complex. The chain is Cytochrome b6-f complex subunit 6 from Rhodomonas salina (Cryptomonas salina).